We begin with the raw amino-acid sequence, 125 residues long: uncharacterized protein (125 aa).

Residues 1-21 (MLFYHCSSFSSSSSSSSSSAS) form a disordered region. A compositionally biased stretch (low complexity) spans 7–21 (SSFSSSSSSSSSSAS).

This is an uncharacterized protein from Saccharomyces cerevisiae (strain ATCC 204508 / S288c) (Baker's yeast).